Here is a 320-residue protein sequence, read N- to C-terminus: Nicotianamine synthase 2 (320 aa).

Belongs to the nicotianamine synthase (NAS)-like family.

It catalyses the reaction 3 S-adenosyl-L-methionine = nicotianamine + 3 S-methyl-5'-thioadenosine + 3 H(+). Functionally, synthesizes nicotianamine, a polyamine which serves as a sensor for the physiological iron status within the plant, and/or might be involved in the transport of iron. In Arabidopsis thaliana (Mouse-ear cress), this protein is Nicotianamine synthase 2 (NAS2).